The chain runs to 1611 residues: DNA (cytosine-5)-methyltransferase 1 (1611 aa).

The segment at 1-120 is interaction with DMAP1; it reads MPARTAPARV…SQTSGEDCRV (120 aa). The interaction with DNMT3A stretch occupies residues 1–148; it reads MPARTAPARV…RRSKSDGETK (148 aa). Interaction with the PRC2/EED-EZH2 complex regions lie at residues 1–334 and 306–603; these read MPAR…TEKK and KPQV…TIRQ. Ser15 bears the Phosphoserine mark. The DMAP1-binding domain maps to 16 to 109; that stretch reads RAFSLPDDVR…SREANGCLEN (94 aa). An N6,N6-dimethyllysine; by EHMT2 modification is found at Lys70. The segment at 123–328 is disordered; it reads AEKGKPPKPV…EEKRRRTTYR (206 aa). Position 133 is a phosphoserine (Ser133). Thr137 is subject to Phosphothreonine. Phosphoserine is present on Ser141. Lys142 carries the N6-methyllysine; by SETD7 modification. Residue Ser143 is modified to Phosphoserine; by PKB/AKT1. The segment at 149–216 is interaction with DNMT3B; that stretch reads SEVSSSPRIT…TSRERVAGLL (68 aa). Phosphoserine is present on residues Ser152 and Ser154. Lys160 carries the post-translational modification N6-acetyllysine. Positions 163–174 are interaction with PCNA; that stretch reads RQTTITSHFPRG. Residues 163–174 are compositionally biased toward low complexity; sequence RQTTITSHFPRG. Thr166 bears the Phosphothreonine mark. A Nuclear localization signal motif is present at residues 177–204; the sequence is KRKPEEEPEKVKSDDSVDEEKDQEEKRR. Composition is skewed to basic and acidic residues over residues 178-191, 199-212, 220-265, 279-311, and 319-328; these read RKPE…KSDD, QEEK…RERV, EPGR…RDVR, KDEK…QVSD, and EEKRRRTTYR. Lys188 bears the N6-acetyllysine mark. Lys257 is modified (N6-acetyllysine; alternate). Residue Lys257 forms a Glycyl lysine isopeptide (Lys-Gly) (interchain with G-Cter in SUMO2); alternate linkage. Ser310 carries the post-translational modification Phosphoserine. Positions 329-548 are DNA replication foci-targeting sequence; the sequence is ELTEKKMTRT…NLNRFTEDSL (220 aa). 2 residues coordinate Zn(2+): Cys351 and Cys354. Residues Ser392 and Ser396 each carry the phosphoserine modification. Zn(2+) contacts are provided by Cys412 and His416. Phosphoserine is present on residues Ser507 and Ser547. The interval 594 to 614 is disordered; the sequence is RAERRQTIRQPAKEKDKGPTK. The CXXC-type zinc-finger motif lies at 643–689; it reads NAFKRRRCGVCEICQQPECGKCKACKDMVKFGGSGRSKQACQKRRCP. Residues Cys650, Cys653, Cys656, Cys661, Cys664, Cys667, Cys683, and Cys688 each contribute to the Zn(2+) site. Positions 690-751 are autoinhibitory linker; sequence NMAMKEADDD…SYYKKVCIDS (62 aa). Residues 695-726 form a disordered region; sequence EADDDEEVDDNIPEMPSPKKMHQGKKKKQNKN. A compositionally biased stretch (acidic residues) spans 696-706; sequence ADDDEEVDDNI. At Ser711 the chain carries Phosphoserine. A compositionally biased stretch (basic residues) spans 713–725; the sequence is KKMHQGKKKKQNK. A Phosphoserine modification is found at Ser729. Lys746 is modified (N6-acetyllysine). The 126-residue stretch at 752-877 folds into the BAH 1 domain; the sequence is ETLEVGDCVS…QDYARFESPP (126 aa). Ser875 carries the post-translational modification Phosphoserine. An N6-acetyllysine mark is found at Lys888, Lys954, Lys958, Lys972, and Lys1051. One can recognise a BAH 2 domain in the interval 969 to 1097; it reads HYRKYSDYIK…AKSKSFEDPP (129 aa). Positions 1091 to 1126 are disordered; the sequence is KSFEDPPNHARSTGNKGKGKGKGKNRTKSQTCEPSE. 4 repeat units span residues 1106-1107, 1108-1109, 1110-1111, and 1112-1113. A 5 X 2 AA tandem repeats of K-G region spans residues 1106 to 1115; it reads KGKGKGKGKN. A compositionally biased stretch (basic residues) spans 1107-1117; sequence GKGKGKGKNRT. An N6-acetyllysine mark is found at Lys1108, Lys1110, Lys1112, Lys1114, and Lys1118. The stretch at 1114-1115 is one 5; approximate repeat; it reads KN. An interaction with the PRC2/EED-EZH2 complex region spans residues 1118-1611; sequence KSQTCEPSEL…AKIKEEAAKD (494 aa). The SAM-dependent MTase C5-type domain maps to 1136 to 1595; sequence LRTLDVFSGC…LEIKRCMLAK (460 aa). The tract at residues 1136–1611 is catalytic; sequence LRTLDVFSGC…AKIKEEAAKD (476 aa). Residues Ser1143, 1147 to 1148, 1165 to 1166, 1187 to 1188, and Cys1188 contribute to the S-adenosyl-L-methionine site; these read GL, EM, and DC. Residue Cys1223 is part of the active site. Residues Lys1346 and Lys1412 each carry the N6-acetyllysine modification. Residues Asn1574 and Val1576 each coordinate S-adenosyl-L-methionine. Residue Lys1605 forms a Glycyl lysine isopeptide (Lys-Gly) (interchain with G-Cter in SUMO2) linkage.

This sequence belongs to the class I-like SAM-binding methyltransferase superfamily. C5-methyltransferase family. In terms of assembly, homodimer. Forms a stable complex with E2F1, BB1 and HDAC1. Forms a complex with DMAP1 and HDAC2, with direct interaction. Interacts with the PRC2/EED-EZH2 complex. Probably part of a corepressor complex containing ZNF304, TRIM28, SETDB1 and DNMT1. Interacts with UHRF1; promoting its recruitment to hemimethylated DNA. Interacts with USP7, promoting its deubiquitination. Interacts with PCNA. Interacts with MBD2 and MBD3. Interacts with DNMT3A and DNMT3B. Interacts with UBC9. Interacts with CSNK1D. Interacts with HDAC1. Interacts with BAZ2A/TIP5. Interacts with SIRT7. Interacts with ZNF263; recruited to the SIX3 promoter along with other proteins involved in chromatin modification and transcriptional corepression where it contributes to transcriptional repression. Interacts with L3MBTL3 and DCAF5; the interaction requires DNMT1 methylation at Lys-142 and is necessary to target DNMT1 for ubiquitination by the CRL4-DCAF5 E3 ubiquitin ligase complex and proteasomal degradation. Interacts with PHF20L1; the interaction requires DNMT1 methylation at Lys-142 and protects DNMT1 from ubiquitination and proteasomal degradation. Sumoylated; sumoylation increases activity. In terms of processing, acetylation on multiple lysines, mainly by KAT2B/PCAF, regulates cell cycle G(2)/M transition. Deacetylation of Lys-1346 and Lys-1412 by SIRT1 increases methyltransferase activity. Post-translationally, phosphorylation of Ser-154 by CDKs is important for enzymatic activity and protein stability. Phosphorylation of Ser-143 by AKT1 prevents methylation by SETD7 thereby increasing DNMT1 stability. Methylation at Lys-142 by SETD7 is necessary for the regulation of DNMT1 proteasomal degradation. In terms of processing, ubiquitinated by UHRF1; interaction with USP7 counteracts ubiquitination by UHRF1 by promoting deubiquitination and preventing degradation by the proteasome.

Its subcellular location is the nucleus. The catalysed reaction is a 2'-deoxycytidine in DNA + S-adenosyl-L-methionine = a 5-methyl-2'-deoxycytidine in DNA + S-adenosyl-L-homocysteine + H(+). Its function is as follows. Methylates CpG residues. Preferentially methylates hemimethylated DNA. Associates with DNA replication sites in S phase maintaining the methylation pattern in the newly synthesized strand, that is essential for epigenetic inheritance. Associates with chromatin during G2 and M phases to maintain DNA methylation independently of replication. It is responsible for maintaining methylation patterns established in development. DNA methylation is coordinated with methylation of histones. Mediates transcriptional repression by direct binding to HDAC2. In association with DNMT3B and via the recruitment of CTCFL/BORIS, involved in activation of BAG1 gene expression by modulating dimethylation of promoter histone H3 at H3K4 and H3K9. Probably forms a corepressor complex required for activated KRAS-mediated promoter hypermethylation and transcriptional silencing of tumor suppressor genes (TSGs) or other tumor-related genes in colorectal cancer (CRC) cells. Also required to maintain a transcriptionally repressive state of genes in undifferentiated embryonic stem cells (ESCs). Associates at promoter regions of tumor suppressor genes (TSGs) leading to their gene silencing. Promotes tumor growth. The protein is DNA (cytosine-5)-methyltransferase 1 (DNMT1) of Bos taurus (Bovine).